Reading from the N-terminus, the 166-residue chain is Putative 4-hydroxy-4-methyl-2-oxoglutarate aldolase 2 (166 aa).

The residue at position 2 (Ala-2) is an N-acetylalanine. Substrate is bound by residues 81–84 (GGNP) and Arg-103. Asp-104 provides a ligand contact to a divalent metal cation.

Belongs to the class II aldolase/RraA-like family. As to quaternary structure, homotrimer. Requires a divalent metal cation as cofactor.

The catalysed reaction is 4-hydroxy-4-methyl-2-oxoglutarate = 2 pyruvate. The enzyme catalyses oxaloacetate + H(+) = pyruvate + CO2. Functionally, catalyzes the aldol cleavage of 4-hydroxy-4-methyl-2-oxoglutarate (HMG) into 2 molecules of pyruvate. Also contains a secondary oxaloacetate (OAA) decarboxylase activity due to the common pyruvate enolate transition state formed following C-C bond cleavage in the retro-aldol and decarboxylation reactions. The protein is Putative 4-hydroxy-4-methyl-2-oxoglutarate aldolase 2 of Arabidopsis thaliana (Mouse-ear cress).